A 176-amino-acid chain; its full sequence is Transmembrane protein 238 (176 aa).

Residues 1-21 are disordered; that stretch reads MAAASPVCGSQASAVGASSPP. The Cytoplasmic portion of the chain corresponds to 1-36; it reads MAAASPVCGSQASAVGASSPPAPAPAPAAGLGRCRM. Positions 9 to 19 are enriched in low complexity; sequence GSQASAVGASS. A helical transmembrane segment spans residues 37 to 57; the sequence is ALLLAVALDVAGMAALLTGVF. Topologically, residues 58–69 are extracellular; sequence AQLQVRGRDFGD. The chain crosses the membrane as a helical span at residues 70–90; that stretch reads LLIYSGALLVFLSLLGWILWY. The Cytoplasmic segment spans residues 91 to 176; it reads TGNIEISRQE…GSVAAGTGSE (86 aa). The span at 124–135 shows a compositional bias: low complexity; sequence SAPATASPRTTA. The disordered stretch occupies residues 124-156; the sequence is SAPATASPRTTAGLRSARRANRAPQPSSSGSRR. Serine 175 carries the post-translational modification Phosphoserine.

Its subcellular location is the membrane. This chain is Transmembrane protein 238 (Tmem238), found in Mus musculus (Mouse).